The chain runs to 370 residues: ATP/GTP phosphatase (370 aa).

The enzyme catalyses ATP + H2O = ADP + phosphate + H(+). It carries out the reaction GTP + H2O = GDP + phosphate + H(+). Functionally, has nucleotide phosphatase activity toward ATP and GTP, but not toward CTP, TTP and ADP. In Helicobacter pylori (strain ATCC 700392 / 26695) (Campylobacter pylori), this protein is ATP/GTP phosphatase.